The following is a 388-amino-acid chain: Succinate--CoA ligase [ADP-forming] subunit beta (388 aa).

An ATP-grasp domain is found at 9-243 (KQLFHRYGIP…ESQLAPLEVR (235 aa)). ATP contacts are provided by residues lysine 45, 52–54 (GRG), glutamate 98, valine 101, and glutamate 106. Mg(2+)-binding residues include asparagine 198 and aspartate 212. Substrate contacts are provided by residues asparagine 263 and 320 to 322 (GIM).

This sequence belongs to the succinate/malate CoA ligase beta subunit family. As to quaternary structure, heterotetramer of two alpha and two beta subunits. Requires Mg(2+) as cofactor.

It carries out the reaction succinate + ATP + CoA = succinyl-CoA + ADP + phosphate. It catalyses the reaction GTP + succinate + CoA = succinyl-CoA + GDP + phosphate. Its pathway is carbohydrate metabolism; tricarboxylic acid cycle; succinate from succinyl-CoA (ligase route): step 1/1. Its function is as follows. Succinyl-CoA synthetase functions in the citric acid cycle (TCA), coupling the hydrolysis of succinyl-CoA to the synthesis of either ATP or GTP and thus represents the only step of substrate-level phosphorylation in the TCA. The beta subunit provides nucleotide specificity of the enzyme and binds the substrate succinate, while the binding sites for coenzyme A and phosphate are found in the alpha subunit. This chain is Succinate--CoA ligase [ADP-forming] subunit beta, found in Syntrophotalea carbinolica (strain DSM 2380 / NBRC 103641 / GraBd1) (Pelobacter carbinolicus).